A 278-amino-acid chain; its full sequence is Bifunctional protein FolD (278 aa).

Residues 164–166 (GRS) and Thr228 each bind NADP(+).

Belongs to the tetrahydrofolate dehydrogenase/cyclohydrolase family. Homodimer.

The catalysed reaction is (6R)-5,10-methylene-5,6,7,8-tetrahydrofolate + NADP(+) = (6R)-5,10-methenyltetrahydrofolate + NADPH. The enzyme catalyses (6R)-5,10-methenyltetrahydrofolate + H2O = (6R)-10-formyltetrahydrofolate + H(+). The protein operates within one-carbon metabolism; tetrahydrofolate interconversion. Its function is as follows. Catalyzes the oxidation of 5,10-methylenetetrahydrofolate to 5,10-methenyltetrahydrofolate and then the hydrolysis of 5,10-methenyltetrahydrofolate to 10-formyltetrahydrofolate. In Mycoplasmopsis synoviae (strain 53) (Mycoplasma synoviae), this protein is Bifunctional protein FolD.